The primary structure comprises 271 residues: Proteasome inhibitor PI31 subunit (271 aa).

Position 2 is an N-acetylalanine (Ala2). Residues 2 to 150 (AGLEVLFASA…PIHEQWEKAN (149 aa)) form an important for homodimerization and interaction with FBXO7 region. Phosphoserine is present on Ser153. Omega-N-methylarginine is present on Arg205. Arg219 is modified (asymmetric dimethylarginine). The interval 222-271 (IDPSSGLPNRLPPGAVPPGARFDPFGPIGTSPPGPNPDHLPPPGYDDMYL) is disordered. An Omega-N-methylarginine modification is found at Arg231. Positions 251–265 (TSPPGPNPDHLPPPG) are enriched in pro residues. The residue at position 252 (Ser252) is a Phosphoserine.

The protein belongs to the proteasome inhibitor PI31 family. Monomer and homodimer. Interacts with FBXO7.

The protein localises to the cytoplasm. It is found in the endoplasmic reticulum. In terms of biological role, plays an important role in control of proteasome function. Inhibits the hydrolysis of protein and peptide substrates by the 20S proteasome. Also inhibits the activation of the proteasome by the proteasome regulatory proteins PA700 and PA28. This Pongo abelii (Sumatran orangutan) protein is Proteasome inhibitor PI31 subunit (PSMF1).